A 230-amino-acid polypeptide reads, in one-letter code: Early E1A protein (230 aa).

Residues 40–48 (PSLHDLFDL) form an interaction with RB1 in competition with E2F1 region. The LXCXE motif, interaction with host RB1 motif lies at 106–110 (LLCLE). A zinc finger lies at 145 to 163 (CLRCAYYQEQGENSICGLC). The segment at 189-230 (KPGSRKRSAVTSRGSVESSKRPCLPEPEQTEPLDLSLKPRPQ) is disordered. The PXDLS motif, CTBP-binding signature appears at 220 to 224 (PLDLS). The short motif at 226–230 (KPRPQ) is the Nuclear localization signal element.

Belongs to the adenoviridae E1A protein family. Interacts with host UBE2I; this interaction interferes with polySUMOylation. Interacts with host RB1; this interaction induces the aberrant dissociation of RB1-E2F1 complex thereby disrupting the activity of RB1 and activating E2F1-regulated genes. Interacts with host ATF7; the interaction enhances ATF7-mediated viral transactivation activity which requires the zinc binding domains of both proteins. Isoform early E1A 32 kDa protein and isoform early E1A 26 kDa protein interact (via N-terminus) with CUL1 and E3 ubiquitin ligase RBX1; these interactions inhibit RBX1-CUL1-dependent elongation reaction of ubiquitin chains and attenuate ubiquitination of SCF(FBXW7) target proteins. Interacts (via PXLXP motif) with host ZMYND11/BS69 (via MYND-type zinc finger); this interaction inhibits E1A mediated transactivation. Interacts with host EP300; this interaction stimulates the acetylation of RB1 by recruiting EP300 and RB1 into a multimeric-protein complex. Interacts with host CTBP1 and CTBP2; this interaction seems to potentiate viral replication. Interacts with host DCAF7. Interacts with host DYRK1A. Interacts with host KPNA4; this interaction allows E1A import into the host nucleus. Interacts with host EP400; this interaction stabilizes MYC. Interacts with host TBP protein; this interaction probably disrupts the TBP-TATA complex.

It is found in the host nucleus. In terms of biological role, plays a role in viral genome replication by driving entry of quiescent cells into the cell cycle. Stimulation of progression from G1 to S phase allows the virus to efficiently use the cellular DNA replicating machinery to achieve viral genome replication. E1A protein has both transforming and trans-activating activities. Induces the disassembly of the E2F1 transcription factor from RB1 by direct competition for the same binding site on RB1, with subsequent transcriptional activation of E2F1-regulated S-phase genes and of the E2 region of the adenoviral genome. Release of E2F1 leads to the ARF-mediated inhibition of MDM2 and causes TP53/p53 to accumulate because it is not targeted for degradation by MDM2-mediated ubiquitination anymore. This increase in TP53, in turn, would arrest the cell proliferation and direct its death but this effect is counteracted by the viral protein E1B-55K. Inactivation of the ability of RB1 to arrest the cell cycle is critical for cellular transformation, uncontrolled cellular growth and proliferation induced by viral infection. Interaction with RBX1 and CUL1 inhibits ubiquitination of the proteins targeted by SCF(FBXW7) ubiquitin ligase complex, and may be linked to unregulated host cell proliferation. The tumorigenesis-restraining activity of E1A may be related to the disruption of the host CtBP-CtIP complex through the CtBP binding motif. The sequence is that of Early E1A protein from Canine adenovirus serotype 1 (strain CLL) (CAdV-1).